The primary structure comprises 427 residues: UBX domain-containing protein 10 (427 aa).

A coiled-coil region spans residues Leu247–Ala311. A UBX domain is found at Ser323–Leu425.

Its subcellular location is the endoplasmic reticulum. In terms of biological role, involved in protein degradation through the ubiquitin/proteasome pathway. This Schizosaccharomyces pombe (strain 972 / ATCC 24843) (Fission yeast) protein is UBX domain-containing protein 10 (ucp10).